The following is a 175-amino-acid chain: Cell number regulator 9 (175 aa).

The next 2 helical transmembrane spans lie at 53-73 (GLCC…AEIV) and 80-100 (CGVA…HWIY).

Belongs to the cornifelin family. In terms of tissue distribution, expressed in roots, coleoptiles, leaves and stalks.

The protein localises to the membrane. This chain is Cell number regulator 9 (CNR9), found in Zea mays (Maize).